The following is a 511-amino-acid chain: Bifunctional purine biosynthesis protein PurH (511 aa).

Positions 1 to 145 (MKRRAIISVS…KNHAYVTAVV (145 aa)) constitute an MGS-like domain.

It belongs to the PurH family.

It catalyses the reaction (6R)-10-formyltetrahydrofolate + 5-amino-1-(5-phospho-beta-D-ribosyl)imidazole-4-carboxamide = 5-formamido-1-(5-phospho-D-ribosyl)imidazole-4-carboxamide + (6S)-5,6,7,8-tetrahydrofolate. The enzyme catalyses IMP + H2O = 5-formamido-1-(5-phospho-D-ribosyl)imidazole-4-carboxamide. The protein operates within purine metabolism; IMP biosynthesis via de novo pathway; 5-formamido-1-(5-phospho-D-ribosyl)imidazole-4-carboxamide from 5-amino-1-(5-phospho-D-ribosyl)imidazole-4-carboxamide (10-formyl THF route): step 1/1. It participates in purine metabolism; IMP biosynthesis via de novo pathway; IMP from 5-formamido-1-(5-phospho-D-ribosyl)imidazole-4-carboxamide: step 1/1. The polypeptide is Bifunctional purine biosynthesis protein PurH (Anoxybacillus flavithermus (strain DSM 21510 / WK1)).